The following is a 364-amino-acid chain: Developmentally-regulated GTP-binding protein 2 (364 aa).

At K21 the chain carries (3S)-3-hydroxylysine. Positions 63–288 (ARVALIGFPS…LLEMLWEYLA (226 aa)) constitute an OBG-type G domain. Residues 69 to 76 (GFPSVGKS), 94 to 98 (FTTLT), 115 to 118 (DLPG), 246 to 249 (NKID), and 269 to 271 (SCG) contribute to the GTP site. Residues S76 and T96 each contribute to the Mg(2+) site. The TGS domain occupies 288 to 363 (ALTCIYTKKR…EHEDVIQIVK (76 aa)).

Belongs to the TRAFAC class OBG-HflX-like GTPase superfamily. OBG GTPase family. In terms of assembly, interacts with RWDD1; this interaction confers protection to polyubiquitination and proteolytic degradation. Interacts with JMJD7; this interaction is direct. Mg(2+) is required as a cofactor. Post-translationally, hydroxylated (with S stereochemistry) at C-3 of Lys-21 by JMJD7; this modification hinders trypsin-catalyzed proteolysis in vitro. Polyubiquitinated. In terms of tissue distribution, highest levels in skeletal muscle, heart and kidney. Low levels in colon, thymus, spleen, small intestine, lung and Leukocytes.

It is found in the nucleus. The protein localises to the cytoplasm. The enzyme catalyses GTP + H2O = GDP + phosphate + H(+). Catalyzes the conversion of GTP to GDP through hydrolysis of the gamma-phosphate bond in GTP. When hydroxylated at C-3 of 'Lys-21' by JMJD7, may bind to RNA and play a role in translation. This is Developmentally-regulated GTP-binding protein 2 from Homo sapiens (Human).